The sequence spans 517 residues: Pseudaminic acid cytidylyltransferase and UDP-2,4-diacetamido-2,4,6-trideoxy-beta-L-altropyranose hydrolase (517 aa).

Residues 1–208 (MRAIAIVLAR…ELSPLEVQDI (208 aa)) are pseudaminic acid cytidylyltransferase. The UDP-2,4-diacetamido-2,4,6-trideoxy-beta-L-altropyranose hydrolase stretch occupies residues 209–517 (AHFRRFRISQ…EGALREFLEI (309 aa)). The Proton acceptor; for UDP-2,4-diacetamido-2,4,6-trideoxy-beta-L-altropyranose hydrolase activity role is filled by histidine 244.

This sequence in the N-terminal section; belongs to the CMP-NeuNAc synthase family. It in the C-terminal section; belongs to the PseG family. Monomer. It depends on Mg(2+) as a cofactor.

It catalyses the reaction UDP-2,4-diacetamido-2,4,6-trideoxy-beta-L-altrose + H2O = 2,4-diacetamido-2,4,6-trideoxy-beta-L-altrose + UDP + H(+). The enzyme catalyses pseudaminate + CTP = CMP-pseudaminate + diphosphate. Catalyzes the fourth and sixth steps in the biosynthesis of pseudaminic acid, a sialic-acid-like sugar that is used to modify flagellin. The C-terminus mediates the fourth step of the pathway and catalyzes the removal of UDP from C-1 of UDP-2,4-diacetamido-2,4,6-trideoxy-beta-L-altropyranose forming 2,4-diacetamido-2,4,6-trideoxy-beta-L-altropyranose. The N-terminal part mediates the last step of the pathway by mediating activation of pseudaminic acid with CMP by forming CMP-pseudaminic acid. The chain is Pseudaminic acid cytidylyltransferase and UDP-2,4-diacetamido-2,4,6-trideoxy-beta-L-altropyranose hydrolase from Helicobacter pylori (strain ATCC 700392 / 26695) (Campylobacter pylori).